The primary structure comprises 156 residues: Small ribosomal subunit protein uS7 (156 aa).

Belongs to the universal ribosomal protein uS7 family. In terms of assembly, part of the 30S ribosomal subunit. Contacts proteins S9 and S11.

Functionally, one of the primary rRNA binding proteins, it binds directly to 16S rRNA where it nucleates assembly of the head domain of the 30S subunit. Is located at the subunit interface close to the decoding center, probably blocks exit of the E-site tRNA. This is Small ribosomal subunit protein uS7 (rspG) from Streptomyces coelicolor (strain ATCC BAA-471 / A3(2) / M145).